A 188-amino-acid polypeptide reads, in one-letter code: uncharacterized protein (188 aa).

At serine 14 the chain carries Phosphoserine. The disordered stretch occupies residues 165-188 (RQAMAAKRNRFRKNVRKLPNKKKH). Residues 171–188 (KRNRFRKNVRKLPNKKKH) are compositionally biased toward basic residues.

The protein resides in the nucleus. Its subcellular location is the nucleolus. This is an uncharacterized protein from Schizosaccharomyces pombe (strain 972 / ATCC 24843) (Fission yeast).